Reading from the N-terminus, the 172-residue chain is NADH-quinone oxidoreductase subunit B (172 aa).

[4Fe-4S] cluster is bound by residues cysteine 52, cysteine 53, cysteine 117, and cysteine 147.

It belongs to the complex I 20 kDa subunit family. NDH-1 is composed of 14 different subunits. Subunits NuoB, C, D, E, F, and G constitute the peripheral sector of the complex. It depends on [4Fe-4S] cluster as a cofactor.

It localises to the cell inner membrane. The catalysed reaction is a quinone + NADH + 5 H(+)(in) = a quinol + NAD(+) + 4 H(+)(out). In terms of biological role, NDH-1 shuttles electrons from NADH, via FMN and iron-sulfur (Fe-S) centers, to quinones in the respiratory chain. Couples the redox reaction to proton translocation (for every two electrons transferred, four hydrogen ions are translocated across the cytoplasmic membrane), and thus conserves the redox energy in a proton gradient. This chain is NADH-quinone oxidoreductase subunit B, found in Ehrlichia ruminantium (strain Gardel).